The following is a 578-amino-acid chain: Tetratricopeptide repeat protein ttc-39B (578 aa).

TPR repeat units follow at residues A297–Y330, C481–I514, and P522–Y554.

The sequence is that of Tetratricopeptide repeat protein ttc-39B from Caenorhabditis elegans.